A 408-amino-acid chain; its full sequence is Zinc finger and SCAN domain-containing protein 1 (408 aa).

Residues 1–34 (MLPRPKAPASPRRPQTPTPSEQDADPGPASPRDT) are disordered. One can recognise an SCAN box domain in the interval 38 to 120 (RLRFRQFQYH…SLVEDLTQMC (83 aa)). 3 disordered regions span residues 136–155 (WSFGEEEDGKSPRSQKEPSQ), 177–203 (LETTQLQQSLHTRAEAEAPRAPGLLGS), and 215–273 (DEPE…GGTQ). Residues 177–187 (LETTQLQQSLH) show a composition bias toward polar residues. 2 C2H2-type zinc fingers span residues 292-314 (FQCADCGMVFTWVTHFIEHQKTH) and 320-342 (FPCPECGKVFLHNSVLTEHGKIH). The interval 344–379 (LEPPRKKAPRSKGPRESVPPRDGAQGPVAPRSPKRP) is disordered. The C2H2-type 3 zinc-finger motif lies at 380-402 (FQCSVCGKAFPWMVHLIDHQKLH).

It localises to the nucleus. May be involved in transcriptional regulation. In Homo sapiens (Human), this protein is Zinc finger and SCAN domain-containing protein 1 (ZSCAN1).